The chain runs to 334 residues: Leucine carboxyl methyltransferase 1 (334 aa).

S-adenosyl-L-methionine contacts are provided by residues Lys37, Arg73, Gly98, Asp122, 171-172, and Glu198; that span reads DL.

Belongs to the methyltransferase superfamily. LCMT family.

The enzyme catalyses [phosphatase 2A protein]-C-terminal L-leucine + S-adenosyl-L-methionine = [phosphatase 2A protein]-C-terminal L-leucine methyl ester + S-adenosyl-L-homocysteine. Its function is as follows. Methylates the carboxyl group of the C-terminal leucine residue of protein phosphatase 2A catalytic subunits to form alpha-leucine ester residues. This Homo sapiens (Human) protein is Leucine carboxyl methyltransferase 1 (LCMT1).